Consider the following 124-residue polypeptide: Succinate dehydrogenase cytochrome b556 subunit (124 aa).

The Cytoplasmic portion of the chain corresponds to 1 to 29 (MTKIKQEIYNKRPTSPHLTIYKPQISSTL). A helical membrane pass occupies residues 30–55 (SILHRMTGVALFFVVSILVWWLILSK). Topologically, residues 56 to 67 (YDNNYLQLASCC) are periplasmic. A helical transmembrane segment spans residues 68–88 (IIKICLVAFSYSWCYHLCNGI). His-83 is a heme binding site. The Cytoplasmic portion of the chain corresponds to 89–103 (RHLFWDIGYGFSIKA). Residues 104–124 (VNITGWCVVVCSILLTMLLWV) form a helical membrane-spanning segment.

It belongs to the cytochrome b560 family. As to quaternary structure, part of an enzyme complex containing four subunits: a flavoprotein, an iron-sulfur protein, plus two membrane-anchoring proteins, SdhC and SdhD. The complex can form homotrimers. The cofactor is heme.

The protein localises to the cell inner membrane. The protein operates within carbohydrate metabolism; tricarboxylic acid cycle. Its function is as follows. Membrane-anchoring subunit of succinate dehydrogenase (SDH). This is Succinate dehydrogenase cytochrome b556 subunit (sdhC) from Rickettsia prowazekii (strain Madrid E).